Reading from the N-terminus, the 447-residue chain is N-succinylarginine dihydrolase (447 aa).

Residues 19 to 28 (AGLSVGNKAS), Asn110, and 137 to 138 (HR) each bind substrate. Residue Glu174 is part of the active site. Arg213 lines the substrate pocket. His249 is a catalytic residue. Residues Asp251 and Asn365 each coordinate substrate. Cys371 acts as the Nucleophile in catalysis.

This sequence belongs to the succinylarginine dihydrolase family. In terms of assembly, homodimer.

It carries out the reaction N(2)-succinyl-L-arginine + 2 H2O + 2 H(+) = N(2)-succinyl-L-ornithine + 2 NH4(+) + CO2. It functions in the pathway amino-acid degradation; L-arginine degradation via AST pathway; L-glutamate and succinate from L-arginine: step 2/5. Catalyzes the hydrolysis of N(2)-succinylarginine into N(2)-succinylornithine, ammonia and CO(2). This Photorhabdus laumondii subsp. laumondii (strain DSM 15139 / CIP 105565 / TT01) (Photorhabdus luminescens subsp. laumondii) protein is N-succinylarginine dihydrolase.